Reading from the N-terminus, the 101-residue chain is Large ribosomal subunit protein eL30 (101 aa).

It belongs to the eukaryotic ribosomal protein eL30 family.

This is Large ribosomal subunit protein eL30 from Pyrobaculum calidifontis (strain DSM 21063 / JCM 11548 / VA1).